A 336-amino-acid chain; its full sequence is UDP-N-acetylglucosamine--N-acetylmuramyl-(pentapeptide) pyrophosphoryl-undecaprenol N-acetylglucosamine transferase (336 aa).

UDP-N-acetyl-alpha-D-glucosamine is bound by residues asparagine 102, arginine 144, serine 172, and glutamine 264.

It belongs to the glycosyltransferase 28 family. MurG subfamily.

It is found in the cell membrane. The enzyme catalyses di-trans,octa-cis-undecaprenyl diphospho-N-acetyl-alpha-D-muramoyl-L-alanyl-D-glutamyl-meso-2,6-diaminopimeloyl-D-alanyl-D-alanine + UDP-N-acetyl-alpha-D-glucosamine = di-trans,octa-cis-undecaprenyl diphospho-[N-acetyl-alpha-D-glucosaminyl-(1-&gt;4)]-N-acetyl-alpha-D-muramoyl-L-alanyl-D-glutamyl-meso-2,6-diaminopimeloyl-D-alanyl-D-alanine + UDP + H(+). Its pathway is cell wall biogenesis; peptidoglycan biosynthesis. Its function is as follows. Cell wall formation. Catalyzes the transfer of a GlcNAc subunit on undecaprenyl-pyrophosphoryl-MurNAc-pentapeptide (lipid intermediate I) to form undecaprenyl-pyrophosphoryl-MurNAc-(pentapeptide)GlcNAc (lipid intermediate II). The polypeptide is UDP-N-acetylglucosamine--N-acetylmuramyl-(pentapeptide) pyrophosphoryl-undecaprenol N-acetylglucosamine transferase (Rubrobacter xylanophilus (strain DSM 9941 / JCM 11954 / NBRC 16129 / PRD-1)).